We begin with the raw amino-acid sequence, 459 residues long: Exodeoxyribonuclease 7 large subunit (459 aa).

Belongs to the XseA family. In terms of assembly, heterooligomer composed of large and small subunits.

The protein resides in the cytoplasm. It carries out the reaction Exonucleolytic cleavage in either 5'- to 3'- or 3'- to 5'-direction to yield nucleoside 5'-phosphates.. Its function is as follows. Bidirectionally degrades single-stranded DNA into large acid-insoluble oligonucleotides, which are then degraded further into small acid-soluble oligonucleotides. In Yersinia pseudotuberculosis serotype O:3 (strain YPIII), this protein is Exodeoxyribonuclease 7 large subunit.